The following is a 146-amino-acid chain: Acidic phospholipase A2 S13-69J (146 aa).

An N-terminal signal peptide occupies residues 1–19; the sequence is MYPAHLLVLLAVCVSLLGA. The propeptide occupies 20–27; sequence ASIPPQPL. 7 cysteine pairs are disulfide-bonded: cysteine 38–cysteine 98, cysteine 54–cysteine 145, cysteine 56–cysteine 72, cysteine 71–cysteine 126, cysteine 78–cysteine 119, cysteine 87–cysteine 112, and cysteine 105–cysteine 117. 3 residues coordinate Ca(2+): tyrosine 55, glycine 57, and glycine 59. Histidine 75 is a catalytic residue. Aspartate 76 lines the Ca(2+) pocket. The active site involves aspartate 120.

The protein belongs to the phospholipase A2 family. Group I subfamily. D49 sub-subfamily. The cofactor is Ca(2+). As to expression, expressed by the venom gland.

The protein resides in the secreted. It carries out the reaction a 1,2-diacyl-sn-glycero-3-phosphocholine + H2O = a 1-acyl-sn-glycero-3-phosphocholine + a fatty acid + H(+). Snake venom phospholipase A2 (PLA2) that inhibits collagen-induced platelet aggregation. PLA2 catalyzes the calcium-dependent hydrolysis of the 2-acyl groups in 3-sn-phosphoglycerides. In Austrelaps superbus (Lowland copperhead snake), this protein is Acidic phospholipase A2 S13-69J.